The following is a 1017-amino-acid chain: Anaphase-promoting complex subunit 5 (1017 aa).

5 TPR repeats span residues 30–63 (KQSLSHLLIRHIKENNYQDTVKEVSLYDFIEKEL), 182–214 (DMSMDQEQQQQQQEDYNEISNYENKIKFLSPLD), 252–286 (VKRVHLISLLFNIGYQDYDQSLEDLHRYFDYVNGQ), 337–370 (PYAVLNLVRLHYHFGHYEESYLALREAIRIAQER), and 508–541 (NNNNNNNNNNNSSNSNNNGGVNMFGKSFHLWNDI). Over residues 451 to 525 (INSNNYNSNN…NNNSSNSNNN (75 aa)) the composition is skewed to low complexity. Disordered stretches follow at residues 451–527 (INSN…NNGG) and 617–636 (NNNNNNNNNNNQIKQQQQQN). 5 TPR repeats span residues 642 to 675 (LLSFCKLALLYSKKSKYNEAIQILIKCFSIYKTQ), 756 to 790 (VICYQKIIKYYCNVRGMYEKSMNLIVKGIQISRDF), 838 to 871 (ADSNIALIKIHLSTDRLDKAITLIKETLPMVLSD), 876 to 908 (SQLYLLWAKSLISTSTKQSIDYLNRSEQLFLQL), and 931 to 964 (KEIYYLKSIIYNDLGDIENRNLYAKKFKSILVPS).

Belongs to the APC5 family. In terms of assembly, the APC/C is composed of at least 13 subunits that stay tightly associated throughout the cell cycle: anapc1, anapc2, anapc3, anapc4, anapc5, anapc6, anapc7, anapc8, anapc10, anapc11, cdc20, cdc26 and cdh1.

Its subcellular location is the nucleus. It participates in protein modification; protein ubiquitination. Its function is as follows. Component of the anaphase promoting complex/cyclosome (APC/C), a cell cycle-regulated E3 ubiquitin-protein ligase complex that controls progression through mitosis and the G1 phase of the cell cycle. The polypeptide is Anaphase-promoting complex subunit 5 (anapc5) (Dictyostelium discoideum (Social amoeba)).